The primary structure comprises 675 residues: Potassium-transporting ATPase ATP-binding subunit (675 aa).

4 helical membrane-spanning segments follow: residues 38–58 (VMFVVYLGTALTAYLTVANLV), 67–87 (LAITLLLLLTVLFANFAEGMA), 216–236 (IALSILLSGLTLIFLLAVVTL), and 253–273 (IALLVCLIPTTIGGLLPAIGI). Aspartate 304 acts as the 4-aspartylphosphate intermediate in catalysis. ATP-binding positions include aspartate 341, glutamate 345, 371-378 (FTAQTRMS), and lysine 389. Residues aspartate 512 and aspartate 516 each coordinate Mg(2+). 3 helical membrane-spanning segments follow: residues 582-602 (FAILPALFVTAYPQLGVLNVM), 610-630 (AVLSAVIFNALIIPVLIPLAL), and 654-674 (GGILVPFIAIKLIDLLIGGLM).

Belongs to the cation transport ATPase (P-type) (TC 3.A.3) family. Type IA subfamily. In terms of assembly, the system is composed of three essential subunits: KdpA, KdpB and KdpC.

The protein localises to the cell membrane. The catalysed reaction is K(+)(out) + ATP + H2O = K(+)(in) + ADP + phosphate + H(+). In terms of biological role, part of the high-affinity ATP-driven potassium transport (or Kdp) system, which catalyzes the hydrolysis of ATP coupled with the electrogenic transport of potassium into the cytoplasm. This subunit is responsible for energy coupling to the transport system and for the release of the potassium ions to the cytoplasm. This chain is Potassium-transporting ATPase ATP-binding subunit, found in Deinococcus radiodurans (strain ATCC 13939 / DSM 20539 / JCM 16871 / CCUG 27074 / LMG 4051 / NBRC 15346 / NCIMB 9279 / VKM B-1422 / R1).